The primary structure comprises 212 residues: ATP-dependent dethiobiotin synthetase BioD (212 aa).

12 to 17 (DCGKTF) serves as a coordination point for ATP. Residue T16 participates in Mg(2+) binding. Residue K33 is part of the active site. S37 contacts substrate. Residues D50, 110 to 113 (EGAG), and 170 to 171 (NC) contribute to the ATP site. Residues D50 and E110 each coordinate Mg(2+).

Belongs to the dethiobiotin synthetase family. In terms of assembly, homodimer. Mg(2+) is required as a cofactor.

The protein resides in the cytoplasm. The catalysed reaction is (7R,8S)-7,8-diammoniononanoate + CO2 + ATP = (4R,5S)-dethiobiotin + ADP + phosphate + 3 H(+). The protein operates within cofactor biosynthesis; biotin biosynthesis; biotin from 7,8-diaminononanoate: step 1/2. Catalyzes a mechanistically unusual reaction, the ATP-dependent insertion of CO2 between the N7 and N8 nitrogen atoms of 7,8-diaminopelargonic acid (DAPA, also called 7,8-diammoniononanoate) to form a ureido ring. This is ATP-dependent dethiobiotin synthetase BioD from Legionella pneumophila subsp. pneumophila (strain Philadelphia 1 / ATCC 33152 / DSM 7513).